A 359-amino-acid chain; its full sequence is MQILADLLNTIPAIDPAAMSRAQRHIDGLLKPVGSLGKLEALAIQLAGMPGLNGIPHVGKKAILVMCADHGVWEEGVAISPKEVTAIQAENMTRGTTGVCVLAAQAGANVHVIDVGIDTAEPIPGLINMRVARGSGNIASAPAMSRRQAEKLLLDVICYTRELAKNGVTLFGVGELGMANTTPAAAIVSTITGWDPEEVVGIGANLPTDKLANKIDVVRRAITLNQPNPQDGVDVLAKVGGFDLVGIAGVMLGAASCGLPVLLDGFLSYAAALAACQMSPAIKPYLIPSHLSAEKGARIALSHLGLEPYLNMDMRLGEGSGAALAMPIIEAACAIYNNMGELAASNIVLPGNTTSDLNS.

The Proton acceptor role is filled by Glu318.

The protein belongs to the CobT family. Homodimer.

It catalyses the reaction 5,6-dimethylbenzimidazole + nicotinate beta-D-ribonucleotide = alpha-ribazole 5'-phosphate + nicotinate + H(+). It functions in the pathway nucleoside biosynthesis; alpha-ribazole biosynthesis; alpha-ribazole from 5,6-dimethylbenzimidazole: step 1/2. Catalyzes the synthesis of alpha-ribazole-5'-phosphate from nicotinate mononucleotide (NAMN) and 5,6-dimethylbenzimidazole (DMB). This Escherichia coli O127:H6 (strain E2348/69 / EPEC) protein is Nicotinate-nucleotide--dimethylbenzimidazole phosphoribosyltransferase.